The chain runs to 162 residues: Large ribosomal subunit protein uL10 (162 aa).

This sequence belongs to the universal ribosomal protein uL10 family. As to quaternary structure, part of the ribosomal stalk of the 50S ribosomal subunit. The N-terminus interacts with L11 and the large rRNA to form the base of the stalk. The C-terminus forms an elongated spine to which L12 dimers bind in a sequential fashion forming a multimeric L10(L12)X complex.

In terms of biological role, forms part of the ribosomal stalk, playing a central role in the interaction of the ribosome with GTP-bound translation factors. The chain is Large ribosomal subunit protein uL10 from Borrelia garinii subsp. bavariensis (strain ATCC BAA-2496 / DSM 23469 / PBi) (Borreliella bavariensis).